The chain runs to 199 residues: Calcium-binding protein CAST (199 aa).

Residues 1-13 are compositionally biased toward basic and acidic residues; that stretch reads MGSVQDENKDEFK. The tract at residues 1–31 is disordered; the sequence is MGSVQDENKDEFKQSLTRGKLKPSSSSSFRL. EF-hand domains follow at residues 36–71, 75–110, 125–160, and 163–198; these read LNSI…LGLD, SEIE…VFFG, QDES…LGLP, and SEID…VIVP. 4 residues coordinate Ca(2+): Asp-49, Asn-51, Asp-53, and Glu-60. Asp-138, Asn-140, Asp-142, Glu-149, Asp-178, Asp-180, Arg-182, and Glu-187 together coordinate Ca(2+).

Its function is as follows. Not known. Probably binds 3 calcium ions. The protein is Calcium-binding protein CAST of Solanum tuberosum (Potato).